The sequence spans 122 residues: Large ribosomal subunit protein uL14 (122 aa).

It belongs to the universal ribosomal protein uL14 family. In terms of assembly, part of the 50S ribosomal subunit. Forms a cluster with proteins L3 and L19. In the 70S ribosome, L14 and L19 interact and together make contacts with the 16S rRNA in bridges B5 and B8.

In terms of biological role, binds to 23S rRNA. Forms part of two intersubunit bridges in the 70S ribosome. This chain is Large ribosomal subunit protein uL14, found in Trichormus variabilis (strain ATCC 29413 / PCC 7937) (Anabaena variabilis).